A 248-amino-acid polypeptide reads, in one-letter code: DNA repair protein RecO (248 aa).

It belongs to the RecO family.

Its function is as follows. Involved in DNA repair and RecF pathway recombination. The polypeptide is DNA repair protein RecO (Thermoanaerobacter sp. (strain X514)).